The following is a 279-amino-acid chain: Putative expansin-A26 (279 aa).

An N-terminal signal peptide occupies residues 1–27 (MKLLEKMIYVEFLMIIMAMWVVPMSYG). Residues 76-186 (QGACGYGNLF…RRIPCSKTGG (111 aa)) form the Expansin-like EG45 domain. The Expansin-like CBD domain maps to 196-275 (YFLMVLIYNV…NWGFGQTFDG (80 aa)).

This sequence belongs to the expansin family. Expansin A subfamily.

The protein localises to the secreted. The protein resides in the cell wall. It localises to the membrane. In terms of biological role, causes loosening and extension of plant cell walls by disrupting non-covalent bonding between cellulose microfibrils and matrix glucans. No enzymatic activity has been found. This is Putative expansin-A26 (EXPA26) from Arabidopsis thaliana (Mouse-ear cress).